Reading from the N-terminus, the 283-residue chain is MLRVAVPNKGALSESATSILSEAGYRKRTDSRDLSVLDPENQVEFYFLRPKDIAVYVGSGELDLGITGRDLALDSGAPVQERLALGFGRSTFRYAAPAGREWKVEDLYDKRIATSYPNLVLSDLRRRGIEAEVIRLDGAVEISIQLGVADAIADVVGSGRTLRQHNLVAFGETLCDSEGVLVERVGADRDDRARNQLVARIQGVVFAQQYLMLDYDCPKELLDQAVQITPGLESPTVSPLADEGWVAVRALVPRGKGNSVMDRLADLGAKAILATDIRSCRAF.

This sequence belongs to the ATP phosphoribosyltransferase family. Long subfamily. Mg(2+) is required as a cofactor.

The protein resides in the cytoplasm. The catalysed reaction is 1-(5-phospho-beta-D-ribosyl)-ATP + diphosphate = 5-phospho-alpha-D-ribose 1-diphosphate + ATP. The protein operates within amino-acid biosynthesis; L-histidine biosynthesis; L-histidine from 5-phospho-alpha-D-ribose 1-diphosphate: step 1/9. Its activity is regulated as follows. Feedback inhibited by histidine. Functionally, catalyzes the condensation of ATP and 5-phosphoribose 1-diphosphate to form N'-(5'-phosphoribosyl)-ATP (PR-ATP). Has a crucial role in the pathway because the rate of histidine biosynthesis seems to be controlled primarily by regulation of HisG enzymatic activity. The chain is ATP phosphoribosyltransferase from Nocardia farcinica (strain IFM 10152).